Reading from the N-terminus, the 270-residue chain is MRIALGIQYDGAAFCGWQAQPHGKTVQDRLEHALAEFARVPLHTTVAGRTDTGVHGLGQVVHFDTDLDREVFSWVRGTNAFLPSTVAVQWAKPMPETFHARFSAFERTYYYALYVHPVRSPMLAGRAGWIHTPLDDDAMRAAAAHLIGEHDFSSFRSSECQSKTPVKHLYQIDVRRVGHFVHFRFRANAFLHHMVRNLMGCLVAVGRGRYPADWLADVLAGRDRNLAAPTFMADGLYLAHVGYPAEFAVPPAQLGSVPWSSVWADLDPQS.

Residue Asp-51 is the Nucleophile of the active site. Tyr-109 is a binding site for substrate.

It belongs to the tRNA pseudouridine synthase TruA family. In terms of assembly, homodimer.

It catalyses the reaction uridine(38/39/40) in tRNA = pseudouridine(38/39/40) in tRNA. In terms of biological role, formation of pseudouridine at positions 38, 39 and 40 in the anticodon stem and loop of transfer RNAs. In Burkholderia lata (strain ATCC 17760 / DSM 23089 / LMG 22485 / NCIMB 9086 / R18194 / 383), this protein is tRNA pseudouridine synthase A.